A 150-amino-acid chain; its full sequence is Cytosine deaminase (150 aa).

The CMP/dCMP-type deaminase domain occupies 3–121 (FDDKKGLQVA…KLLIENGVEV (119 aa)). N44 is a binding site for substrate. Residue H55 coordinates Zn(2+). The active-site Proton donor is the E57. 2 residues coordinate Zn(2+): C84 and C87. Substrate is bound at residue D147.

It belongs to the cytidine and deoxycytidylate deaminase family. As to quaternary structure, homodimer. Zn(2+) serves as cofactor.

The protein localises to the cytoplasm. Its subcellular location is the nucleus. It catalyses the reaction cytosine + H2O + H(+) = uracil + NH4(+). It functions in the pathway pyrimidine metabolism; UMP biosynthesis via salvage pathway; uracil from cytosine: step 1/1. Functionally, catalyzes the hydrolytic deamination of cytosine to uracil or 5-methylcytosine to thymine. Is involved in the pyrimidine salvage pathway, which allows the cell to utilize cytosine for pyrimidine nucleotide synthesis. The sequence is that of Cytosine deaminase from Candida albicans (strain SC5314 / ATCC MYA-2876) (Yeast).